The following is a 352-amino-acid chain: Adenosine deaminase (352 aa).

An N-acetylalanine modification is found at Ala2. Zn(2+) contacts are provided by His15 and His17. The substrate site is built by His17 and Asp19. Lys54 carries the post-translational modification N6-acetyllysine. Gly184 serves as a coordination point for substrate. A Zn(2+)-binding site is contributed by His214. The active-site Proton donor is Glu217. At Lys232 the chain carries N6-acetyllysine. Asp295 contacts Zn(2+). Asp296 contacts substrate.

This sequence belongs to the metallo-dependent hydrolases superfamily. Adenosine and AMP deaminases family. Interacts with DPP4 (via extracellular domain). Interacts with PLG (via Kringle 4 domain); the interaction stimulates PLG activation when in complex with DPP4. Zn(2+) serves as cofactor. Detected in brain neurons in the median emninence (at protein level). Expressed in secondary deciduum (at protein level). Found in all tissues, occurs in large amounts in T-lymphocytes and, at the time of weaning, in gastrointestinal tissues.

The protein resides in the cell membrane. It localises to the cell junction. The protein localises to the cytoplasmic vesicle lumen. Its subcellular location is the cytoplasm. It is found in the lysosome. The enzyme catalyses adenosine + H2O + H(+) = inosine + NH4(+). It catalyses the reaction 2'-deoxyadenosine + H2O + H(+) = 2'-deoxyinosine + NH4(+). The catalysed reaction is cordycepin + H2O + H(+) = 3'-deoxyinosine + NH4(+). Its function is as follows. Catalyzes the hydrolytic deamination of adenosine and 2-deoxyadenosine. Plays an important role in purine metabolism and in adenosine homeostasis. Modulates signaling by extracellular adenosine, and so contributes indirectly to cellular signaling events. Acts as a positive regulator of T-cell coactivation, by binding DPP4. Its interaction with DPP4 regulates lymphocyte-epithelial cell adhesion. Enhances dendritic cell immunogenicity by affecting dendritic cell costimulatory molecule expression and cytokines and chemokines secretion. Enhances CD4+ T-cell differentiation and proliferation. Acts as a positive modulator of adenosine receptors ADORA1 and ADORA2A, by enhancing their ligand affinity via conformational change. Stimulates plasminogen activation. Plays a role in male fertility. Plays a protective role in early postimplantation embryonic development. Also responsible for the deamination of cordycepin (3'-deoxyadenosine), a fungal natural product that shows antitumor, antibacterial, antifungal, antivirus, and immune regulation properties. This is Adenosine deaminase (Ada) from Mus musculus (Mouse).